The sequence spans 81 residues: MKLTCVMIVAVLFLTANTFVTAVPHSSNVLENLYLKARHEMENPEASKLNTRYDCEPPGNFCGMIKVGPPCCSGWCFFACA.

A signal peptide spans 1–22; it reads MKLTCVMIVAVLFLTANTFVTA. Residues 23–51 constitute a propeptide that is removed on maturation; it reads VPHSSNVLENLYLKARHEMENPEASKLNT. Cystine bridges form between cysteine 55/cysteine 72, cysteine 62/cysteine 76, and cysteine 71/cysteine 80.

This sequence belongs to the conotoxin O1 superfamily. As to expression, expressed by the venom duct.

Its subcellular location is the secreted. Its function is as follows. Omega-conotoxins act at presynaptic membranes, they bind and block voltage-gated calcium channels. Act on high voltage-activated (HVA) calcium currents in molluscan neurons. The polypeptide is Omega-conotoxin-like Vc6.4 (Conus victoriae (Queen Victoria cone)).